We begin with the raw amino-acid sequence, 434 residues long: Nicotinate phosphoribosyltransferase (434 aa).

Histidine 242 carries the post-translational modification Phosphohistidine; by autocatalysis.

This sequence belongs to the NAPRTase family. In terms of processing, transiently phosphorylated on a His residue during the reaction cycle. Phosphorylation strongly increases the affinity for substrates and increases the rate of nicotinate D-ribonucleotide production. Dephosphorylation regenerates the low-affinity form of the enzyme, leading to product release.

The catalysed reaction is nicotinate + 5-phospho-alpha-D-ribose 1-diphosphate + ATP + H2O = nicotinate beta-D-ribonucleotide + ADP + phosphate + diphosphate. The protein operates within cofactor biosynthesis; NAD(+) biosynthesis; nicotinate D-ribonucleotide from nicotinate: step 1/1. Catalyzes the synthesis of beta-nicotinate D-ribonucleotide from nicotinate and 5-phospho-D-ribose 1-phosphate at the expense of ATP. The chain is Nicotinate phosphoribosyltransferase from Chelativorans sp. (strain BNC1).